The sequence spans 111 residues: Nucleoid-associated protein Clim_0875 (111 aa).

It belongs to the YbaB/EbfC family. Homodimer.

It is found in the cytoplasm. It localises to the nucleoid. Its function is as follows. Binds to DNA and alters its conformation. May be involved in regulation of gene expression, nucleoid organization and DNA protection. The protein is Nucleoid-associated protein Clim_0875 of Chlorobium limicola (strain DSM 245 / NBRC 103803 / 6330).